The sequence spans 1171 residues: ATP-dependent helicase/deoxyribonuclease subunit B (1171 aa).

Belongs to the helicase family. AddB/RexB type 2 subfamily. Heterodimer of AddA and RexB. Mg(2+) is required as a cofactor.

Functionally, the heterodimer acts as both an ATP-dependent DNA helicase and an ATP-dependent, dual-direction single-stranded exonuclease. Recognizes the chi site generating a DNA molecule suitable for the initiation of homologous recombination. This subunit has 5' -&gt; 3' nuclease activity but not helicase activity. The protein is ATP-dependent helicase/deoxyribonuclease subunit B of Leuconostoc citreum (strain KM20).